The sequence spans 190 residues: Putative 3-methyladenine DNA glycosylase (190 aa).

The protein belongs to the DNA glycosylase MPG family.

This chain is Putative 3-methyladenine DNA glycosylase, found in Chlamydia abortus (strain DSM 27085 / S26/3) (Chlamydophila abortus).